A 225-amino-acid polypeptide reads, in one-letter code: Protein-disulfide oxidoreductase DsbI (225 aa).

A helical transmembrane segment spans residues 27–47; that stretch reads FLWLLMAIAMGGLIILAHSFF. Cysteine 56 and cysteine 59 are joined by a disulfide. The next 2 membrane-spanning stretches (helical) occupy residues 65 to 85 and 87 to 107; these read AMFV…NIVL and LIGC…SIKL. A disulfide bridge links cysteine 128 with cysteine 154. A helical transmembrane segment spans residues 199–219; sequence CMLAFGLCLILLLVMSGAWAL.

Belongs to the DsbB family. DsbI subfamily. As to quaternary structure, interacts with DsbL.

The protein resides in the cell inner membrane. Required for disulfide bond formation in some proteins. Part of a redox system composed of DsbI and DsbL that mediates formation of an essential disulfide bond in AssT. The chain is Protein-disulfide oxidoreductase DsbI from Salmonella choleraesuis (strain SC-B67).